The following is a 391-amino-acid chain: 3-ketoacyl-CoA thiolase (391 aa).

C95 (acyl-thioester intermediate) is an active-site residue. Active-site proton acceptor residues include H347 and C377.

The protein belongs to the thiolase-like superfamily. Thiolase family. Heterotetramer of two alpha chains (FadB) and two beta chains (FadA).

The protein resides in the cytoplasm. The enzyme catalyses an acyl-CoA + acetyl-CoA = a 3-oxoacyl-CoA + CoA. It participates in lipid metabolism; fatty acid beta-oxidation. Its function is as follows. Catalyzes the final step of fatty acid oxidation in which acetyl-CoA is released and the CoA ester of a fatty acid two carbons shorter is formed. This chain is 3-ketoacyl-CoA thiolase, found in Marinomonas sp. (strain MWYL1).